A 310-amino-acid polypeptide reads, in one-letter code: MKVLWPALVVTLLAGCRADVEPGPEVQLGKEWATWQASQPWEQALGRFWNYLRWVQTLSEQVQEELLSSQVTEELTALMDDTMKEVKACKSELEEQLGPVAEETKARVSKELQAAQARLGADMEEVRNRLAQYRGELQAMVGQSTEELRGRLNAHLRKLRKRLLRDAEDLQQRLAVYQAGIREGAERSVNTLREHLGPLAEQAATMHTLVSKPLQERAEAWAQRLRGRLEKAGFPVGDRLDEVREQVQEVRAKVEEQANQVRLQAEAFQGRLKSWFEPLVQDMQQKWAELVEKVQLALRAVPTSVPSEKQ.

An N-terminal signal peptide occupies residues 1 to 18 (MKVLWPALVVTLLAGCRA). Repeat copies occupy residues 77–98 (ALMD…EQLG), 99–120 (PVAE…ARLG), 121–142 (ADME…AMVG), 143–164 (QSTE…KRLL), 165–186 (RDAE…EGAE), 187–208 (RSVN…TMHT), 209–226 (LVSK…QRLR), and 227–248 (GRLE…EQVQ). Positions 77 to 248 (ALMDDTMKEV…RLDEVREQVQ (172 aa)) are 8 X 22 AA approximate tandem repeats. An LDL and other lipoprotein receptors binding region spans residues 155-165 (HLRKLRKRLLR). Residue 159-162 (LRKR) coordinates heparin. The lipid-binding and lipoprotein association stretch occupies residues 207-283 (HTLVSKPLQE…SWFEPLVQDM (77 aa)). 222 to 229 (AQRLRGRL) serves as a coordination point for heparin. A homooligomerization region spans residues 259 to 310 (NQVRLQAEAFQGRLKSWFEPLVQDMQQKWAELVEKVQLALRAVPTSVPSEKQ). Residues 271–283 (RLKSWFEPLVQDM) are specificity for association with VLDL.

This sequence belongs to the apolipoprotein A1/A4/E family. In terms of assembly, homotetramer. May interact with ABCA1; functionally associated with ABCA1 in the biogenesis of HDLs. May interact with APP/A4 amyloid-beta peptide; the interaction is extremely stable in vitro but its physiological significance is unclear. May interact with MAPT. May interact with MAP2. In the cerebrospinal fluid, interacts with secreted SORL1. Interacts with PMEL; this allows the loading of PMEL luminal fragment on ILVs to induce fibril nucleation. In terms of processing, APOE exists as multiple glycosylated and sialylated glycoforms within cells and in plasma. The extent of glycosylation and sialylation are tissue and context specific. Glycated in plasma VLDL. Post-translationally, phosphorylated by FAM20C in the extracellular medium.

Its subcellular location is the secreted. It is found in the extracellular space. The protein resides in the extracellular matrix. The protein localises to the extracellular vesicle. It localises to the endosome. Its subcellular location is the multivesicular body. APOE is an apolipoprotein, a protein associating with lipid particles, that mainly functions in lipoprotein-mediated lipid transport between organs via the plasma and interstitial fluids. APOE is a core component of plasma lipoproteins and is involved in their production, conversion and clearance. Apolipoproteins are amphipathic molecules that interact both with lipids of the lipoprotein particle core and the aqueous environment of the plasma. As such, APOE associates with chylomicrons, chylomicron remnants, very low density lipoproteins (VLDL) and intermediate density lipoproteins (IDL) but shows a preferential binding to high-density lipoproteins (HDL). It also binds a wide range of cellular receptors including the LDL receptor/LDLR and the very low-density lipoprotein receptor/VLDLR that mediate the cellular uptake of the APOE-containing lipoprotein particles. Finally, APOE also has a heparin-binding activity and binds heparan-sulfate proteoglycans on the surface of cells, a property that supports the capture and the receptor-mediated uptake of APOE-containing lipoproteins by cells. This is Apolipoprotein E (APOE) from Dicerorhinus sumatrensis harrissoni (Bornean rhinoceros).